Consider the following 326-residue polypeptide: MFCFWRTSALAVLLIWGVFVAGSSCTDKNQTTQNNSSSPLTQVNTTVSVQIGTKALLCCFSIPLTKAVLITWIIKLRGLPSCTIAYKVDTKTNETSCLGRNITWASTPDHSPELQISAVTLQHEGTYTCETVTPEGNFEKNYDLQVLVPPEVTYFPEKNRSAVCEAMAGKPAAQISWSPDGDCVTTSESHSNGTVTVRSTCHWEQNNVSDVSCIVSHLTGNQSLSIELSRGGNQSLRPYIPYIIPSIIILIIIGCICLLKISGFRKCKLPKLEATSAIEEDEMQPYASYTEKSNPLYDTVTKVEAFPVSQGEVNGTDCLTLSAIGI.

An N-terminal signal peptide occupies residues 1-25 (MFCFWRTSALAVLLIWGVFVAGSSC). Topologically, residues 26–238 (TDKNQTTQNN…SRGGNQSLRP (213 aa)) are extracellular. N-linked (GlcNAc...) asparagine glycans are attached at residues Asn-29, Asn-34, Asn-35, Asn-44, Asn-93, Asn-101, Asn-159, Asn-192, Asn-207, Asn-221, and Asn-233. Positions 51–136 (IGTKALLCCF…YTCETVTPEG (86 aa)) constitute an Ig-like V-type domain. Disulfide bonds link Cys-58/Cys-129 and Cys-82/Cys-97. The 92-residue stretch at 138–229 (FEKNYDLQVL…GNQSLSIELS (92 aa)) folds into the Ig-like C2-type domain. 2 disulfides stabilise this stretch: Cys-164-Cys-213 and Cys-183-Cys-201. A helical transmembrane segment spans residues 239 to 259 (YIPYIIPSIIILIIIGCICLL). The Cytoplasmic portion of the chain corresponds to 260-326 (KISGFRKCKL…DCLTLSAIGI (67 aa)).

Belongs to the CD200R family. In terms of assembly, CD200 and CD200R1 interact via their respective N-terminal Ig-like domains. Expressed in granulocytes, monocytes, most T-cells and a subset of NK, NKT and B-cells (at protein level). Expressed in the spleen, lung, liver, testis, bone marrow, lymph nodes, spinal cord, kidney, uterus and small intestine. Expressed in mast and dendritic cells. Expressed in the lung of N.brasiliensis-infected mice.

The protein resides in the cell membrane. Functionally, inhibitory receptor for the CD200/OX2 cell surface glycoprotein. Limits inflammation by inhibiting the expression of pro-inflammatory molecules including TNF-alpha, interferons, and inducible nitric oxide synthase (iNOS) in response to selected stimuli. The sequence is that of Cell surface glycoprotein CD200 receptor 1 (Cd200r1) from Mus musculus (Mouse).